We begin with the raw amino-acid sequence, 267 residues long: Neuferricin (267 aa).

Residues 1–17 (MLKYLVALISMVLAVWT) form the signal peptide. A Cytochrome b5 heme-binding domain is found at 53 to 150 (LLTKEQLSLY…RDYTPVGKLI (98 aa)).

The protein belongs to the cytochrome b5 family. MAPR subfamily.

It is found in the secreted. Its function is as follows. Heme-binding protein which promotes neuronal but not astrocyte differentiation. This is Neuferricin (cyb5d2) from Danio rerio (Zebrafish).